The sequence spans 310 residues: HTH-type transcriptional activator TtdR (310 aa).

The HTH lysR-type domain maps to 6-63 (PLAKDLQVLVEIVHSGSFSAAAATLGQTPAFVTKRIQILENTLATTLLNRSARGVALT). The segment at residues 23–42 (FSAAAATLGQTPAFVTKRIQ) is a DNA-binding region (H-T-H motif).

The protein belongs to the LysR transcriptional regulatory family.

In terms of biological role, positive regulator required for L-tartrate-dependent anaerobic growth on glycerol. Induces expression of the ttdA-ttdB-ygjE operon. The chain is HTH-type transcriptional activator TtdR (ttdR) from Escherichia coli (strain K12).